The sequence spans 203 residues: N-(5'-phosphoribosyl)anthranilate isomerase (203 aa).

This sequence belongs to the TrpF family.

It carries out the reaction N-(5-phospho-beta-D-ribosyl)anthranilate = 1-(2-carboxyphenylamino)-1-deoxy-D-ribulose 5-phosphate. It functions in the pathway amino-acid biosynthesis; L-tryptophan biosynthesis; L-tryptophan from chorismate: step 3/5. This chain is N-(5'-phosphoribosyl)anthranilate isomerase, found in Sulfurihydrogenibium sp. (strain YO3AOP1).